The chain runs to 185 residues: Elongation factor P (185 aa).

This sequence belongs to the elongation factor P family.

The protein localises to the cytoplasm. It functions in the pathway protein biosynthesis; polypeptide chain elongation. Functionally, involved in peptide bond synthesis. Stimulates efficient translation and peptide-bond synthesis on native or reconstituted 70S ribosomes in vitro. Probably functions indirectly by altering the affinity of the ribosome for aminoacyl-tRNA, thus increasing their reactivity as acceptors for peptidyl transferase. This is Elongation factor P from Bacillus cereus (strain G9842).